A 360-amino-acid chain; its full sequence is 3-dehydroquinate synthase (360 aa).

NAD(+)-binding positions include 104 to 108 (GVIGD), 128 to 129 (TT), Lys141, and 168 to 171 (FLDT). Zn(2+) contacts are provided by Glu183, His243, and His260.

Belongs to the sugar phosphate cyclases superfamily. Dehydroquinate synthase family. Requires Co(2+) as cofactor. Zn(2+) serves as cofactor. It depends on NAD(+) as a cofactor.

Its subcellular location is the cytoplasm. It carries out the reaction 7-phospho-2-dehydro-3-deoxy-D-arabino-heptonate = 3-dehydroquinate + phosphate. It functions in the pathway metabolic intermediate biosynthesis; chorismate biosynthesis; chorismate from D-erythrose 4-phosphate and phosphoenolpyruvate: step 2/7. Catalyzes the conversion of 3-deoxy-D-arabino-heptulosonate 7-phosphate (DAHP) to dehydroquinate (DHQ). This Streptococcus equi subsp. equi (strain 4047) protein is 3-dehydroquinate synthase.